The primary structure comprises 184 residues: Large ribosomal subunit protein uL10 (184 aa).

The protein belongs to the universal ribosomal protein uL10 family. Part of the ribosomal stalk of the 50S ribosomal subunit. The N-terminus interacts with L11 and the large rRNA to form the base of the stalk. The C-terminus forms an elongated spine to which L12 dimers bind in a sequential fashion forming a multimeric L10(L12)X complex.

Functionally, forms part of the ribosomal stalk, playing a central role in the interaction of the ribosome with GTP-bound translation factors. This is Large ribosomal subunit protein uL10 from Gluconobacter oxydans (strain 621H) (Gluconobacter suboxydans).